Here is an 844-residue protein sequence, read N- to C-terminus: Probable inorganic carbon transporter subunit DabA 1 (844 aa).

Zn(2+)-binding residues include cysteine 359, aspartate 361, histidine 543, and cysteine 558.

The protein belongs to the inorganic carbon transporter (TC 9.A.2) DabA family. As to quaternary structure, forms a complex with DabB. It depends on Zn(2+) as a cofactor.

It is found in the cell inner membrane. In terms of biological role, part of an energy-coupled inorganic carbon pump. This Bradyrhizobium sp. (strain BTAi1 / ATCC BAA-1182) protein is Probable inorganic carbon transporter subunit DabA 1.